Here is a 241-residue protein sequence, read N- to C-terminus: tRNA pseudouridine synthase A (241 aa).

Asp51 serves as the catalytic Nucleophile. Tyr110 serves as a coordination point for substrate.

It belongs to the tRNA pseudouridine synthase TruA family. Homodimer.

It carries out the reaction uridine(38/39/40) in tRNA = pseudouridine(38/39/40) in tRNA. In terms of biological role, formation of pseudouridine at positions 38, 39 and 40 in the anticodon stem and loop of transfer RNAs. The protein is tRNA pseudouridine synthase A of Campylobacter jejuni subsp. jejuni serotype O:2 (strain ATCC 700819 / NCTC 11168).